A 341-amino-acid polypeptide reads, in one-letter code: Phosphate acyltransferase (341 aa).

This sequence belongs to the PlsX family. Homodimer. Probably interacts with PlsY.

Its subcellular location is the cytoplasm. It carries out the reaction a fatty acyl-[ACP] + phosphate = an acyl phosphate + holo-[ACP]. Its pathway is lipid metabolism; phospholipid metabolism. Catalyzes the reversible formation of acyl-phosphate (acyl-PO(4)) from acyl-[acyl-carrier-protein] (acyl-ACP). This enzyme utilizes acyl-ACP as fatty acyl donor, but not acyl-CoA. This is Phosphate acyltransferase from Vibrio campbellii (strain ATCC BAA-1116).